We begin with the raw amino-acid sequence, 195 residues long: MASKGAARVRKKEIVKVVHGALLRTNIKAQMASAAPPLGPQLGQRGLNVANFCKEFNKETGHFKQGVPLPTRITVKPDRTYDLEICTPTTTWLLKQAAGIGRGKASKDEIVGKLTVKHLYEIAKIKSRDKALQHVPLEQICRMLIKTCRTLGIDVQYHDLDPVELKEFLVARKEKVDAQLKDLADKKAAKMLRTT.

Belongs to the universal ribosomal protein uL11 family. In terms of assembly, component of the mitochondrial ribosome large subunit (39S) which comprises a 16S rRNA and about 50 distinct proteins.

The protein localises to the mitochondrion. This Caenorhabditis elegans protein is Large ribosomal subunit protein uL11m (mrpl-11).